Consider the following 292-residue polypeptide: ATP synthase gamma chain (292 aa).

The protein belongs to the ATPase gamma chain family. In terms of assembly, F-type ATPases have 2 components, CF(1) - the catalytic core - and CF(0) - the membrane proton channel. CF(1) has five subunits: alpha(3), beta(3), gamma(1), delta(1), epsilon(1). CF(0) has three main subunits: a, b and c.

It localises to the cell inner membrane. Produces ATP from ADP in the presence of a proton gradient across the membrane. The gamma chain is believed to be important in regulating ATPase activity and the flow of protons through the CF(0) complex. The chain is ATP synthase gamma chain from Maridesulfovibrio salexigens (strain ATCC 14822 / DSM 2638 / NCIMB 8403 / VKM B-1763) (Desulfovibrio salexigens).